Reading from the N-terminus, the 360-residue chain is Dihydroorotate dehydrogenase (quinone) (360 aa).

Residues alanine 65–lysine 69 and threonine 89 contribute to the FMN site. Position 69 (lysine 69) interacts with substrate. Asparagine 114–phenylalanine 118 is a binding site for substrate. Residues asparagine 147 and asparagine 180 each coordinate FMN. A substrate-binding site is contributed by asparagine 180. The active-site Nucleophile is serine 183. Asparagine 185 lines the substrate pocket. FMN is bound by residues lysine 225 and threonine 253. Position 254-255 (asparagine 254–threonine 255) interacts with substrate. FMN contacts are provided by residues glycine 276, glycine 305, and tyrosine 326–threonine 327.

This sequence belongs to the dihydroorotate dehydrogenase family. Type 2 subfamily. As to quaternary structure, monomer. The cofactor is FMN.

Its subcellular location is the cell membrane. The catalysed reaction is (S)-dihydroorotate + a quinone = orotate + a quinol. Its pathway is pyrimidine metabolism; UMP biosynthesis via de novo pathway; orotate from (S)-dihydroorotate (quinone route): step 1/1. Its function is as follows. Catalyzes the conversion of dihydroorotate to orotate with quinone as electron acceptor. The protein is Dihydroorotate dehydrogenase (quinone) of Verminephrobacter eiseniae (strain EF01-2).